The primary structure comprises 270 residues: MEAVPEKKKKVATVPGTLKKKVPAGPKTLKKKVPAVPETLKKKRRNFAELKVKRLRKKFALKTLRKARRKLIYEKAKHYHKEYRQMYRTEIRMARMARKAGNFYVPAEPKLAFVIRIRGINGVSPKVRKVLQLLRLRQIFNGTFVKLNKASINMLRIVEPYIAWGYPNLKSVNELIYKRGYGKINKKRIALTDNSLIARSLGKFGIICMEDLIHEIYTVGKRFKEANNFLWPFKLSSPRGGMKKKTTHFVEGGDAGNREDQINRLIRRMN.

Met1 is subject to N-acetylmethionine. Repeat copies occupy residues 7 to 18 (KKKKVATVPGTL), 19 to 29 (KKKVPAGPKTL), 30 to 40 (KKKVPAVPETL), 41 to 52 (KKKRRNFAELKV), 53 to 64 (KRLRKKFALKTL), and 65 to 76 (RKARRKLIYEKA). Residues 7–76 (KKKKVATVPG…ARRKLIYEKA (70 aa)) are 6 X 12 AA tandem repeats. Thr39 bears the Phosphothreonine mark. The residue at position 146 (Lys146) is an N6-acetyllysine. Lys149 carries the N6-succinyllysine modification. Residue Tyr161 is modified to Phosphotyrosine.

Belongs to the universal ribosomal protein uL30 family. In terms of assembly, component of the large ribosomal subunit. Homodimer. Interacts with DHX33.

It is found in the cytoplasm. In terms of biological role, component of the large ribosomal subunit. The ribosome is a large ribonucleoprotein complex responsible for the synthesis of proteins in the cell. Binds to G-rich structures in 28S rRNA and in mRNAs. Plays a regulatory role in the translation apparatus; inhibits cell-free translation of mRNAs. In Mus musculus (Mouse), this protein is Large ribosomal subunit protein uL30 (Rpl7).